We begin with the raw amino-acid sequence, 445 residues long: Ribosomal protein uS12 methylthiotransferase RimO (445 aa).

Residues 4–119 (IKVALVSLGC…LLESIKVFLK (116 aa)) enclose the MTTase N-terminal domain. 6 residues coordinate [4Fe-4S] cluster: Cys13, Cys48, Cys82, Cys156, Cys160, and Cys163. Residues 142–372 (TTPTYTAYVR…MILQQSISKD (231 aa)) enclose the Radical SAM core domain. The 67-residue stretch at 375-441 (KEKIGKTYEV…EYDLIGVVYN (67 aa)) folds into the TRAM domain.

Belongs to the methylthiotransferase family. RimO subfamily. Requires [4Fe-4S] cluster as cofactor.

The protein resides in the cytoplasm. The catalysed reaction is L-aspartate(89)-[ribosomal protein uS12]-hydrogen + (sulfur carrier)-SH + AH2 + 2 S-adenosyl-L-methionine = 3-methylsulfanyl-L-aspartate(89)-[ribosomal protein uS12]-hydrogen + (sulfur carrier)-H + 5'-deoxyadenosine + L-methionine + A + S-adenosyl-L-homocysteine + 2 H(+). Catalyzes the methylthiolation of an aspartic acid residue of ribosomal protein uS12. In Clostridium botulinum (strain ATCC 19397 / Type A), this protein is Ribosomal protein uS12 methylthiotransferase RimO.